A 401-amino-acid chain; its full sequence is LysM domain-containing GPI-anchored protein LYP4 (401 aa).

The first 23 residues, 1–23, serve as a signal peptide directing secretion; sequence MPPPLLLLLLLAAAAAAVAPARS. Intrachain disulfides connect C30–C96, C36–C162, C94–C160, and C96–C162. LysM domains are found at residues 106–156 and 175–218; these read VRYV…TLFV and LTYV…IIVV. Cystine bridges form between C223-C255 and C250-C279. N-linked (GlcNAc...) asparagine glycosylation occurs at N240. Residues N281, N288, and N310 are each glycosylated (N-linked (GlcNAc...) asparagine). S373 is lipidated: GPI-anchor amidated serine. The propeptide at 374-401 is removed in mature form; sequence SGPPPAGRHVVGDVLGAFALCLVGNLLW.

Interacts with LYP6. Interacts with CEBIP. Interacts with CERK1. As to expression, expressed in roots and leaves.

The protein resides in the cell membrane. In terms of biological role, functions in innate immunity. Functions as a pattern recognition receptor (PRR), sensing bacterial peptidoglycan (PGN) and fungal chitin at the cell surface. Involved in resistance against the bacterial pathogen Xanthomonas oryzae pv. oryzae (Xoo) and the fungal pathogen Magnaporthe oryzae. Binds PGN and fungal chitin in vitro. Involved in microbe-associated molecular patterns (MAMPs) perception and participates in the activation of defense genes against the bacterial pathogen Xanthomonas oryzae pv. oryzicola (Xoc) or the fungal pathogen Magnaporthe oryzae. The sequence is that of LysM domain-containing GPI-anchored protein LYP4 from Oryza sativa subsp. japonica (Rice).